The primary structure comprises 292 residues: Phosphatidylserine decarboxylase proenzyme (292 aa).

Residues Asp89, His146, and Ser252 each act as charge relay system; for autoendoproteolytic cleavage activity in the active site. The active-site Schiff-base intermediate with substrate; via pyruvic acid; for decarboxylase activity is the Ser252. Ser252 carries the pyruvic acid (Ser); by autocatalysis modification.

The protein belongs to the phosphatidylserine decarboxylase family. PSD-B subfamily. Prokaryotic type I sub-subfamily. Heterodimer of a large membrane-associated beta subunit and a small pyruvoyl-containing alpha subunit. It depends on pyruvate as a cofactor. Post-translationally, is synthesized initially as an inactive proenzyme. Formation of the active enzyme involves a self-maturation process in which the active site pyruvoyl group is generated from an internal serine residue via an autocatalytic post-translational modification. Two non-identical subunits are generated from the proenzyme in this reaction, and the pyruvate is formed at the N-terminus of the alpha chain, which is derived from the carboxyl end of the proenzyme. The autoendoproteolytic cleavage occurs by a canonical serine protease mechanism, in which the side chain hydroxyl group of the serine supplies its oxygen atom to form the C-terminus of the beta chain, while the remainder of the serine residue undergoes an oxidative deamination to produce ammonia and the pyruvoyl prosthetic group on the alpha chain. During this reaction, the Ser that is part of the protease active site of the proenzyme becomes the pyruvoyl prosthetic group, which constitutes an essential element of the active site of the mature decarboxylase.

The protein localises to the cell membrane. It carries out the reaction a 1,2-diacyl-sn-glycero-3-phospho-L-serine + H(+) = a 1,2-diacyl-sn-glycero-3-phosphoethanolamine + CO2. It functions in the pathway phospholipid metabolism; phosphatidylethanolamine biosynthesis; phosphatidylethanolamine from CDP-diacylglycerol: step 2/2. Its function is as follows. Catalyzes the formation of phosphatidylethanolamine (PtdEtn) from phosphatidylserine (PtdSer). In Shewanella baltica (strain OS185), this protein is Phosphatidylserine decarboxylase proenzyme.